Reading from the N-terminus, the 556-residue chain is Urocanate hydratase (556 aa).

NAD(+) is bound by residues 52-53, Gln-130, 176-178, Glu-196, Arg-201, 242-243, 263-267, 273-274, and Tyr-322; these read GG, GMG, NA, QTSAH, and YL. The active site involves Cys-410. Gly-492 lines the NAD(+) pocket.

Belongs to the urocanase family. The cofactor is NAD(+).

The protein localises to the cytoplasm. It carries out the reaction 4-imidazolone-5-propanoate = trans-urocanate + H2O. It functions in the pathway amino-acid degradation; L-histidine degradation into L-glutamate; N-formimidoyl-L-glutamate from L-histidine: step 2/3. Catalyzes the conversion of urocanate to 4-imidazolone-5-propionate. The polypeptide is Urocanate hydratase (Shewanella frigidimarina (strain NCIMB 400)).